A 187-amino-acid chain; its full sequence is MIPTVKLNFITSNKNKLAEVKAILGNVVEIDSQAIEVPEIQGSIEEIAKEKARRAAEEIGGPVLTEDTALGFRALKGLPGAYIKHFLSALGHDGLNKMLDSFEDRSAEAVCTFAFCRGPGEEPILFQGRTEGIIVRPRGPLNFGWDPIFEHNGMTYAEMDKEEKNRVSHRYKALAKLKQWLEDGTLP.

Residue 11-16 (TSNKNK) participates in ITP binding. Position 39 (glutamate 39) interacts with Mg(2+). ITP is bound by residues lysine 51, 67 to 68 (DT), lysine 84, 143 to 146 (FGWD), lysine 164, and 169 to 170 (HR).

Belongs to the HAM1 NTPase family. Homodimer. Mg(2+) serves as cofactor. Requires Mn(2+) as cofactor.

The protein resides in the cytoplasm. The protein localises to the nucleus. It carries out the reaction ITP + H2O = IMP + diphosphate + H(+). The catalysed reaction is dITP + H2O = dIMP + diphosphate + H(+). It catalyses the reaction XTP + H2O = XMP + diphosphate + H(+). In terms of biological role, pyrophosphatase that hydrolyzes non-canonical purine nucleotides such as inosine triphosphate (ITP), deoxyinosine triphosphate (dITP) or xanthosine 5'-triphosphate (XTP) to their respective monophosphate derivatives. The enzyme does not distinguish between the deoxy- and ribose forms. Probably excludes non-canonical purines from RNA and DNA precursor pools, thus preventing their incorporation into RNA and DNA and avoiding chromosomal lesions. In Aspergillus fumigatus (strain ATCC MYA-4609 / CBS 101355 / FGSC A1100 / Af293) (Neosartorya fumigata), this protein is Inosine triphosphate pyrophosphatase.